A 660-amino-acid chain; its full sequence is Threonine--tRNA ligase (660 aa).

Residues 1 to 49 (MPDSIVHVKKGQRFLDVIKDKNVVAVKIDSVLHDLRDVAERDVDAIPVS) enclose the TGS domain. The tract at residues 225 to 554 (DHRRIIAEMD…LLEHYAGKLP (330 aa)) is catalytic. Positions 318, 369, and 531 each coordinate Zn(2+).

This sequence belongs to the class-II aminoacyl-tRNA synthetase family. Homodimer. It depends on Zn(2+) as a cofactor.

The protein localises to the cytoplasm. The catalysed reaction is tRNA(Thr) + L-threonine + ATP = L-threonyl-tRNA(Thr) + AMP + diphosphate + H(+). In terms of biological role, catalyzes the attachment of threonine to tRNA(Thr) in a two-step reaction: L-threonine is first activated by ATP to form Thr-AMP and then transferred to the acceptor end of tRNA(Thr). The sequence is that of Threonine--tRNA ligase from Thermoplasma acidophilum (strain ATCC 25905 / DSM 1728 / JCM 9062 / NBRC 15155 / AMRC-C165).